Here is a 575-residue protein sequence, read N- to C-terminus: Methionine--tRNA ligase, mitochondrial (575 aa).

Positions 20–32 (PIFYPNAKPHLGH) match the 'HIGH' region motif. The 'KMSKS' region signature appears at 341–345 (KMSKS). Position 344 (lysine 344) interacts with ATP.

Belongs to the class-I aminoacyl-tRNA synthetase family.

It is found in the mitochondrion matrix. The catalysed reaction is tRNA(Met) + L-methionine + ATP = L-methionyl-tRNA(Met) + AMP + diphosphate. In terms of biological role, catalyzes the attachment of methionine to tRNA(Met) in the mitochondrion. The polypeptide is Methionine--tRNA ligase, mitochondrial (MSM1) (Saccharomyces cerevisiae (strain ATCC 204508 / S288c) (Baker's yeast)).